A 270-amino-acid polypeptide reads, in one-letter code: Small ribosomal subunit protein uS2 (270 aa).

Residues 207 to 225 (EEPENTEEAAEEAATEEVV) are compositionally biased toward acidic residues. The interval 207-270 (EEPENTEEAA…SESAPAPVAA (64 aa)) is disordered. The segment covering 226-258 (ETAAAEAAAATNADNWDVAPDAGAGAADWAATD) has biased composition (low complexity).

It belongs to the universal ribosomal protein uS2 family. In terms of assembly, component of the small ribosomal subunit. Mature ribosomes consist of a small (40S) and a large (60S) subunit. The 40S subunit contains about 33 different proteins and 1 molecule of RNA (18S). The 60S subunit contains about 49 different proteins and 3 molecules of RNA (25S, 5.8S and 5S). Interacts with RPS21.

It is found in the cytoplasm. Functionally, required for the assembly and/or stability of the 40S ribosomal subunit. Required for the processing of the 20S rRNA-precursor to mature 18S rRNA in a late step of the maturation of 40S ribosomal subunits. The polypeptide is Small ribosomal subunit protein uS2 (Yarrowia lipolytica (strain CLIB 122 / E 150) (Yeast)).